Consider the following 379-residue polypeptide: Chaperone protein DnaJ (379 aa).

In terms of domain architecture, J spans 5–70 (DYYEILGVSK…QKRAAYDQYG (66 aa)). A CR-type zinc finger spans residues 134–212 (GVTKEIRIPT…CHGHGRVEKS (79 aa)). Positions 147, 150, 164, 167, 186, 189, 200, and 203 each coordinate Zn(2+). 4 CXXCXGXG motif repeats span residues 147–154 (CDVCHGSG), 164–171 (CPTCHGSG), 186–193 (CPHCQGRG), and 200–207 (CHKCHGHG).

The protein belongs to the DnaJ family. In terms of assembly, homodimer. The cofactor is Zn(2+).

It localises to the cytoplasm. Functionally, participates actively in the response to hyperosmotic and heat shock by preventing the aggregation of stress-denatured proteins and by disaggregating proteins, also in an autonomous, DnaK-independent fashion. Unfolded proteins bind initially to DnaJ; upon interaction with the DnaJ-bound protein, DnaK hydrolyzes its bound ATP, resulting in the formation of a stable complex. GrpE releases ADP from DnaK; ATP binding to DnaK triggers the release of the substrate protein, thus completing the reaction cycle. Several rounds of ATP-dependent interactions between DnaJ, DnaK and GrpE are required for fully efficient folding. Also involved, together with DnaK and GrpE, in the DNA replication of plasmids through activation of initiation proteins. This chain is Chaperone protein DnaJ, found in Salmonella agona (strain SL483).